A 360-amino-acid polypeptide reads, in one-letter code: tRNA N6-adenosine threonylcarbamoyltransferase (360 aa).

Residues His-111 and His-115 each coordinate Fe cation. Residues 134–138 (LVSGG), Asp-167, Gly-180, Asp-184, and Asn-279 each bind substrate. Residue Asp-307 participates in Fe cation binding.

Belongs to the KAE1 / TsaD family. Fe(2+) serves as cofactor.

The protein localises to the cytoplasm. The catalysed reaction is L-threonylcarbamoyladenylate + adenosine(37) in tRNA = N(6)-L-threonylcarbamoyladenosine(37) in tRNA + AMP + H(+). Its function is as follows. Required for the formation of a threonylcarbamoyl group on adenosine at position 37 (t(6)A37) in tRNAs that read codons beginning with adenine. Is involved in the transfer of the threonylcarbamoyl moiety of threonylcarbamoyl-AMP (TC-AMP) to the N6 group of A37, together with TsaE and TsaB. TsaD likely plays a direct catalytic role in this reaction. The polypeptide is tRNA N6-adenosine threonylcarbamoyltransferase (Acaryochloris marina (strain MBIC 11017)).